The following is a 457-amino-acid chain: NADH-ubiquinone oxidoreductase chain 4 (457 aa).

12 helical membrane passes run 22-42, 59-79, 95-115, 116-136, 148-168, 191-211, 223-243, 257-277, 282-302, 309-329, 350-370, and 433-453; these read NLWP…IALI, SMQL…LIAS, IVLV…LELI, LFYI…TRWG, FIFY…ALYF, LTVW…IYGF, PVAG…YGLM, SSLP…IICI, LKAL…AGVF, INGA…LFAL, LILP…LGFP, and LFLL…LVLI.

It belongs to the complex I subunit 4 family.

It localises to the mitochondrion membrane. It carries out the reaction a ubiquinone + NADH + 5 H(+)(in) = a ubiquinol + NAD(+) + 4 H(+)(out). Core subunit of the mitochondrial membrane respiratory chain NADH dehydrogenase (Complex I) that is believed to belong to the minimal assembly required for catalysis. Complex I functions in the transfer of electrons from NADH to the respiratory chain. The immediate electron acceptor for the enzyme is believed to be ubiquinone. The polypeptide is NADH-ubiquinone oxidoreductase chain 4 (ND4) (Arbacia lixula (Black urchin)).